We begin with the raw amino-acid sequence, 410 residues long: UDP-N-acetylglucosamine--dolichyl-phosphate N-acetylglucosaminephosphotransferase (410 aa).

At 1 to 10 (MWAFPELPLP) the chain is on the lumenal side. The helical transmembrane segment at 11–40 (LPLLVNLIGSLLGFVATVTLIPAFRSHFIA) threads the bilayer. Residues 41-60 (ARLCGQDLNKLSQQQIPESQ) lie on the Cytoplasmic side of the membrane. UDP-N-acetyl-alpha-D-glucosamine contacts are provided by residues 46–48 (QDL) and glutamate 58. The helical transmembrane segment at 61-80 (GVISGAVFLIILFCFIPFPF) threads the bilayer. Residues 81 to 93 (LNCFVEEQCKAFP) lie on the Lumenal side of the membrane. Residues 94 to 120 (HHEFVALIGALLAICCMIFLGFADDVL) traverse the membrane as a helical segment. Over 121-123 (NLR) the chain is Cytoplasmic. A helical membrane pass occupies residues 124-145 (WRHKLLLPTAASLPLLMVYFTN). Lysine 127 serves as a coordination point for dolichyl phosphate. Topologically, residues 146-168 (FGNTTIVVPKPFRWILGLHLDLG) are lumenal. N-linked (GlcNAc...) asparagine glycosylation occurs at asparagine 148. The helical transmembrane segment at 169-188 (ILYYVYMGLLAVFCTNAINI) threads the bilayer. 180 to 188 (VFCTNAINI) provides a ligand contact to dolichyl phosphate. Asparagine 187 lines the Mg(2+) pocket. The Cytoplasmic segment spans residues 189-194 (LAGING). Asparagine 193 serves as a coordination point for UDP-N-acetyl-alpha-D-glucosamine. A helical membrane pass occupies residues 195 to 215 (LEAGQSLVISASIIVFNLVEL). At 216-220 (EGDYR) the chain is on the lumenal side. A helical transmembrane segment spans residues 221–244 (DDHIFSLYFMIPFFFTTLGLLYHN). The Cytoplasmic portion of the chain corresponds to 245-252 (WYPSRVFV). A helical transmembrane segment spans residues 253–271 (GDTFCYFAGMTFAVVGILG). Aspartate 254 contributes to the Mg(2+) binding site. The Lumenal segment spans residues 272 to 273 (HF). The helical transmembrane segment at 274 to 295 (SKTMLLFFMPQVFNFLYSLPQL) threads the bilayer. The Cytoplasmic segment spans residues 296-377 (FHIIPCPRHR…LLLKVFGPIH (82 aa)). 303–305 (RHR) is a UDP-N-acetyl-alpha-D-glucosamine binding site. The helical transmembrane segment at 378 to 402 (ERNLTLLLLLLQVLSSAATFSIRYQ) threads the bilayer. At 403–410 (LVRLFYDV) the chain is on the lumenal side.

The protein belongs to the glycosyltransferase 4 family. As to quaternary structure, homodimer. Mg(2+) is required as a cofactor.

It is found in the endoplasmic reticulum membrane. The catalysed reaction is a di-trans,poly-cis-dolichyl phosphate + UDP-N-acetyl-alpha-D-glucosamine = an N-acetyl-alpha-D-glucosaminyl-diphospho-di-trans,poly-cis-dolichol + UMP. It functions in the pathway protein modification; protein glycosylation. Its activity is regulated as follows. Inhibited by natural nucleoside antibiotic tunicamycin, which acts as a structural analog and competitor of UDP-GlcNAc. In terms of biological role, UDP-N-acetylglucosamine--dolichyl-phosphate N-acetylglucosaminephosphotransferase that operates in the biosynthetic pathway of dolichol-linked oligosaccharides, the glycan precursors employed in protein asparagine (N)-glycosylation. The assembly of dolichol-linked oligosaccharides begins on the cytosolic side of the endoplasmic reticulum membrane and finishes in its lumen. The sequential addition of sugars to dolichol pyrophosphate produces dolichol-linked oligosaccharides containing fourteen sugars, including two GlcNAcs, nine mannoses and three glucoses. Once assembled, the oligosaccharide is transferred from the lipid to nascent proteins by oligosaccharyltransferases. Catalyzes the initial step of dolichol-linked oligosaccharide biosynthesis, transfering GlcNAc-1-P from cytosolic UDP-GlcNAc onto the carrier lipid dolichyl phosphate (P-dolichol), yielding GlcNAc-P-P-dolichol embedded in the cytoplasmic leaflet of the endoplasmic reticulum membrane. The sequence is that of UDP-N-acetylglucosamine--dolichyl-phosphate N-acetylglucosaminephosphotransferase from Mus musculus (Mouse).